Here is an 88-residue protein sequence, read N- to C-terminus: Translation initiation factor IF-1 1 (88 aa).

The 72-residue stretch at 1–72 (MAKEELIELD…TKGRINFRHK (72 aa)) folds into the S1-like domain.

It belongs to the IF-1 family. As to quaternary structure, component of the 30S ribosomal translation pre-initiation complex which assembles on the 30S ribosome in the order IF-2 and IF-3, IF-1 and N-formylmethionyl-tRNA(fMet); mRNA recruitment can occur at any time during PIC assembly.

The protein resides in the cytoplasm. One of the essential components for the initiation of protein synthesis. Stabilizes the binding of IF-2 and IF-3 on the 30S subunit to which N-formylmethionyl-tRNA(fMet) subsequently binds. Helps modulate mRNA selection, yielding the 30S pre-initiation complex (PIC). Upon addition of the 50S ribosomal subunit IF-1, IF-2 and IF-3 are released leaving the mature 70S translation initiation complex. The protein is Translation initiation factor IF-1 1 of Burkholderia mallei (strain ATCC 23344).